The following is a 163-amino-acid chain: Small ribosomal subunit protein uS5 (163 aa).

The S5 DRBM domain occupies leucine 8–valine 71.

The protein belongs to the universal ribosomal protein uS5 family. As to quaternary structure, part of the 30S ribosomal subunit. Contacts proteins S4 and S8.

Its function is as follows. With S4 and S12 plays an important role in translational accuracy. Functionally, located at the back of the 30S subunit body where it stabilizes the conformation of the head with respect to the body. This chain is Small ribosomal subunit protein uS5, found in Maridesulfovibrio salexigens (strain ATCC 14822 / DSM 2638 / NCIMB 8403 / VKM B-1763) (Desulfovibrio salexigens).